Here is a 464-residue protein sequence, read N- to C-terminus: Protein FAM90A3 (464 aa).

3 disordered regions span residues 1–42 (MMAR…DPRL), 70–389 (PATL…HDGA), and 411–437 (APSF…SEAP). 2 stretches are compositionally biased toward basic and acidic residues: residues 74–89 (GKKE…KPRV) and 97–114 (NKDK…DPQR). Residues 180 to 197 (LASLSPLRKASLSSSSSL) are compositionally biased toward low complexity.

It belongs to the FAM90 family.

This Homo sapiens (Human) protein is Protein FAM90A3.